We begin with the raw amino-acid sequence, 489 residues long: MSVYGLQRLYIGGGYVDATSGKTFDTFDPATGELLAQVQQASAADVDRAVASAQEGQREWATMTAMQRSRILRRAVDLLRERNDELAAIETRDTGKPIGETLAVDIVTGADVIEYYAGLATAIEGLQVPLRAESFVYTRREPLGVCAGIGAWNYPIQIACWKTAPALAAGNAMVFKPSEVTPLTALKLAEIYTEAGVPAGVFNVVQGDGSVGALLTGHPDIAKVSFTGGVETGKKVMSLAGASSLKEVTMELGGKSPLIVFDDADLDRAADIAVTANFFSSGQVCTNGTRVFVHRSIKDAFTQKVLERVKRIRVGKPTDADTNFGPLVSAAQLDKVLGFIESGKAEGAKLLAGGTRLTDGHFGSGQYVAPTVFGDCRDDMKIVREEIFGPVMSILEFESEDEVIARANDTHYGLAAGVVTENLSRAHRTIHRLEAGICWINTWGESPAEMPVGGYKQSGVGRENGITTLEHYTRIKSVQVELGRYNPVF.

2 residues coordinate K(+): Thr-26 and Asp-93. Position 150–152 (150–152) interacts with NAD(+); it reads GAW. Catalysis depends on Lys-162, which acts as the Charge relay system. 176–179 contacts NAD(+); sequence KPSE. Residue Val-180 participates in K(+) binding. Residue 229–232 participates in NAD(+) binding; the sequence is GVET. Leu-245 contributes to the K(+) binding site. Glu-251 (proton acceptor) is an active-site residue. Residues Gly-253, Cys-285, and Glu-386 each contribute to the NAD(+) site. Cys-285 (nucleophile) is an active-site residue. A Cysteine sulfenic acid (-SOH) modification is found at Cys-285. K(+) contacts are provided by Lys-456 and Gly-459. The active-site Charge relay system is the Glu-463.

This sequence belongs to the aldehyde dehydrogenase family. In terms of assembly, dimer of dimers. The cofactor is K(+).

The catalysed reaction is betaine aldehyde + NAD(+) + H2O = glycine betaine + NADH + 2 H(+). It participates in amine and polyamine biosynthesis; betaine biosynthesis via choline pathway; betaine from betaine aldehyde: step 1/1. Functionally, involved in the biosynthesis of the osmoprotectant glycine betaine. Catalyzes the irreversible oxidation of betaine aldehyde to the corresponding acid. In Burkholderia orbicola (strain MC0-3), this protein is Betaine aldehyde dehydrogenase.